The following is a 110-amino-acid chain: Phosphoribosyl-ATP pyrophosphatase (110 aa).

This sequence belongs to the PRA-PH family.

Its subcellular location is the cytoplasm. It carries out the reaction 1-(5-phospho-beta-D-ribosyl)-ATP + H2O = 1-(5-phospho-beta-D-ribosyl)-5'-AMP + diphosphate + H(+). The protein operates within amino-acid biosynthesis; L-histidine biosynthesis; L-histidine from 5-phospho-alpha-D-ribose 1-diphosphate: step 2/9. In Pseudomonas fluorescens (strain Pf0-1), this protein is Phosphoribosyl-ATP pyrophosphatase.